Consider the following 311-residue polypeptide: 4-diphosphocytidyl-2-C-methyl-D-erythritol kinase (311 aa).

Residue Lys-13 is part of the active site. ATP is bound at residue 114 to 124; that stretch reads PVAGGMAGGSA. Asp-156 is a catalytic residue.

This sequence belongs to the GHMP kinase family. IspE subfamily.

It catalyses the reaction 4-CDP-2-C-methyl-D-erythritol + ATP = 4-CDP-2-C-methyl-D-erythritol 2-phosphate + ADP + H(+). Its pathway is isoprenoid biosynthesis; isopentenyl diphosphate biosynthesis via DXP pathway; isopentenyl diphosphate from 1-deoxy-D-xylulose 5-phosphate: step 3/6. Functionally, catalyzes the phosphorylation of the position 2 hydroxy group of 4-diphosphocytidyl-2C-methyl-D-erythritol. The protein is 4-diphosphocytidyl-2-C-methyl-D-erythritol kinase of Corynebacterium diphtheriae (strain ATCC 700971 / NCTC 13129 / Biotype gravis).